The primary structure comprises 134 residues: (R)-specific enoyl-CoA hydratase (134 aa).

Residues 5–119 (SLEVGQKARL…ATLTTRIFTQ (115 aa)) enclose the MaoC-like domain. Residues 32 to 37 (DFNPLH), Gly55, and Phe84 each bind a (3R)-3-hydroxyacyl-CoA.

Homodimer.

It carries out the reaction a (3R)-3-hydroxyacyl-CoA = a (2E)-enoyl-CoA + H2O. Its function is as follows. Catalyzes the hydration of trans-2-enoyl-CoA with a chain-length of 4-6 carbon atoms, forming the corresponding (3R)-3-hydroxyacyl-CoA. The sequence is that of (R)-specific enoyl-CoA hydratase (phaJ) from Aeromonas caviae (Aeromonas punctata).